We begin with the raw amino-acid sequence, 345 residues long: Adenine deaminase (345 aa).

The Zn(2+) site is built by His24, His26, and His204. The active-site Proton donor is the Glu207. Position 285 (Asp285) interacts with Zn(2+). Asp286 provides a ligand contact to substrate.

This sequence belongs to the metallo-dependent hydrolases superfamily. Adenosine and AMP deaminases family. Adenine deaminase type 2 subfamily. It depends on Zn(2+) as a cofactor.

The enzyme catalyses adenine + H2O + H(+) = hypoxanthine + NH4(+). In terms of biological role, catalyzes the hydrolytic deamination of adenine to hypoxanthine. Plays an important role in the purine salvage pathway and in nitrogen catabolism. This is Adenine deaminase from Albidiferax ferrireducens (strain ATCC BAA-621 / DSM 15236 / T118) (Rhodoferax ferrireducens).